We begin with the raw amino-acid sequence, 99 residues long: MTHVLVRRQGQGKKRRWDVNMTMCFFLFFFVFYVSFQIVLSSSASVGYSRLHLVASPPPPPPRKALRYSTAPFRGPLSRDDIYGDDKRVVHTGPNPLHN.

The N-terminal stretch at M1–M21 is a signal peptide. Residues L77–V89 show a composition bias toward basic and acidic residues. Residues L77–N99 form a disordered region. P94 is subject to Hydroxyproline. The O-linked (Ara...) hydroxyproline glycan is linked to P94.

It belongs to the CLV3/ESR signal peptide family. Post-translationally, the O-glycosylation (arabinosylation) of the hydroxyproline Pro-94 enhances binding affinity of the CLE17p peptide for its receptor. As to expression, mostly expressed in seedlings, roots, flowers, stems and apex, and, to a lower extent, in leaves and siliques.

Its subcellular location is the secreted. The protein localises to the extracellular space. In terms of biological role, extracellular signal peptide that regulates cell fate. Represses root apical meristem maintenance. Regulates the transition of protophloem cells from proliferation to differentiation, thus impinging on postembryonic growth capacity of the root meristem; this signaling pathway requires CRN and CLV2. The polypeptide is CLAVATA3/ESR (CLE)-related protein 17 (Arabidopsis thaliana (Mouse-ear cress)).